Consider the following 310-residue polypeptide: Fucose-specific lectin (310 aa).

6 tandem repeats follow at residues 1–53 (MSTP…KNVI), 54–103 (AKAK…AGAK), 104–151 (FTVA…EGTN), 152–209 (LGVA…FDKA), 210–256 (PPRC…DKRT), and 257–310 (ITPV…PPAE). Residues 1 to 310 (MSTPGAQEVL…LGRRALPPAE (310 aa)) are 6 X approximate tandem repeats. Beta-L-fucose is bound by residues R25, E37, W44, R73, E85, W94, R126, E138, W146, R177, Q189, W198, R230, Q242, R277, and E291.

This sequence belongs to the fungal fucose-specific lectin family.

In terms of biological role, lectin that specifically binds to L-fucose and weakly reacts with mannose and N-acetyl-neuraminic acid. Has strongest preference for the alpha-1,6-fucosylated chain (core fucose) on glycoproteins among alpha-1,2-, alpha-1,3-, alpha-1,4-, and alpha-1,6-fucosylated chains. Binds to fucose residues of IgE in mice and human, causing antigen-independent IgE-mediated mast cell activation and anaphylactoid reactions in mice and is possibly implicated in allergic response to Aspergillus oryzae in humans. Induces secretion of pro-inflammatory cytokines IL6 and IL8 implicated in ocular diseases such as mycotic keratitis, probably through its interaction with host toll-like receptors TLR2 and TLR4, followed by up-regulation of pro-inflammatory cytokines. The sequence is that of Fucose-specific lectin from Aspergillus oryzae (Yellow koji mold).